Consider the following 117-residue polypeptide: Hemerythrin subunit beta (117 aa).

7 residues coordinate Fe cation: histidine 24, histidine 53, glutamate 57, histidine 72, histidine 76, histidine 105, and aspartate 110.

Belongs to the hemerythrin family. Octamer composed of two types of chains: alpha and beta.

In terms of biological role, hemerythrin is a respiratory protein in blood cells of certain marine worms. The oxygen-binding site in each chain contains two iron atoms. The protein is Hemerythrin subunit beta of Lingula reevii (Inarticulated brachiopod).